Consider the following 234-residue polypeptide: Ribosome maturation protein SDO1 homolog (234 aa).

This sequence belongs to the SDO1/SBDS family.

The protein is Ribosome maturation protein SDO1 homolog of Archaeoglobus fulgidus (strain ATCC 49558 / DSM 4304 / JCM 9628 / NBRC 100126 / VC-16).